Here is a 405-residue protein sequence, read N- to C-terminus: ATP phosphoribosyltransferase regulatory subunit (405 aa).

The protein belongs to the class-II aminoacyl-tRNA synthetase family. HisZ subfamily. In terms of assembly, heteromultimer composed of HisG and HisZ subunits.

The protein localises to the cytoplasm. It participates in amino-acid biosynthesis; L-histidine biosynthesis; L-histidine from 5-phospho-alpha-D-ribose 1-diphosphate: step 1/9. Its function is as follows. Required for the first step of histidine biosynthesis. May allow the feedback regulation of ATP phosphoribosyltransferase activity by histidine. The chain is ATP phosphoribosyltransferase regulatory subunit from Microcystis aeruginosa (strain NIES-843 / IAM M-2473).